The following is a 444-amino-acid chain: Ribosomal protein uS12 methylthiotransferase RimO (444 aa).

An MTTase N-terminal domain is found at 3 to 119 (IKIGLVSLGC…IARAVRRVLE (117 aa)). C12, C48, C82, C156, C160, and C163 together coordinate [4Fe-4S] cluster. The Radical SAM core domain maps to 142 to 372 (ATPPYTAYLK…MMLQQEISLQ (231 aa)). Residues 375 to 444 (LKRVGEVIEV…EYDLTGETVL (70 aa)) form the TRAM domain.

This sequence belongs to the methylthiotransferase family. RimO subfamily. Requires [4Fe-4S] cluster as cofactor.

The protein resides in the cytoplasm. It catalyses the reaction L-aspartate(89)-[ribosomal protein uS12]-hydrogen + (sulfur carrier)-SH + AH2 + 2 S-adenosyl-L-methionine = 3-methylsulfanyl-L-aspartate(89)-[ribosomal protein uS12]-hydrogen + (sulfur carrier)-H + 5'-deoxyadenosine + L-methionine + A + S-adenosyl-L-homocysteine + 2 H(+). In terms of biological role, catalyzes the methylthiolation of an aspartic acid residue of ribosomal protein uS12. The protein is Ribosomal protein uS12 methylthiotransferase RimO of Pelotomaculum thermopropionicum (strain DSM 13744 / JCM 10971 / SI).